Reading from the N-terminus, the 326-residue chain is Isoaspartyl peptidase/L-asparaginase (326 aa).

Residue Thr185 is the Nucleophile of the active site. Residues 213–216 and 236–239 contribute to the substrate site; these read RVGD and TGHG.

Belongs to the Ntn-hydrolase family. In terms of assembly, heterodimer of an alpha and beta chain produced by autocleavage. This heterodimer may then dimerize in turn, giving rise to a heterotetramer. Cleaved into an alpha and beta chain by autocatalysis; this activates the enzyme. The N-terminal residue of the beta subunit is responsible for the nucleophile hydrolase activity. In terms of tissue distribution, high expression in the heart and brain while low to minimal expression in the other tissues. In ocular tissues, high levels is observed in the optic nerve and retina while relatively low levels of expression are detected in the iris-ciliary body, lens or retinal pigment epithelium.

The protein resides in the cytoplasm. The enzyme catalyses L-asparagine + H2O = L-aspartate + NH4(+). The catalysed reaction is Cleavage of a beta-linked Asp residue from the N-terminus of a polypeptide.. Has both L-asparaginase and beta-aspartyl peptidase activity. May be involved in the production of L-aspartate, which can act as an excitatory neurotransmitter in some brain regions. Is highly active with L-Asp beta-methyl ester. Besides, has catalytic activity toward beta-aspartyl dipeptides and their methyl esters, including beta-L-Asp-L-Phe, beta-L-Asp-L-Phe methyl ester (aspartame), beta-L-Asp-L-Ala, beta-L-Asp-L-Leu and beta-L-Asp-L-Lys. Does not have aspartylglucosaminidase activity and is inactive toward GlcNAc-L-Asn. Likewise, has no activity toward glutamine. This is Isoaspartyl peptidase/L-asparaginase (Asrgl1) from Mus musculus (Mouse).